Consider the following 1255-residue polypeptide: Membrane-associated guanylate kinase, WW and PDZ domain-containing protein 1 (1255 aa).

Residues E17–G105 enclose the PDZ 1 domain. The region spanning A96–F287 is the Guanylate kinase-like domain. Residue R103–K110 participates in ATP binding. 2 disordered regions span residues H208–D227 and H235–E265. The WW 1 domain occupies G300 to C333. S357 bears the Phosphoserine mark. Residues L359–L392 form the WW 2 domain. The segment at K395–P462 is disordered. The span at Q402–Q414 shows a compositional bias: low complexity. Positions P434–P444 are enriched in pro residues. The 83-residue stretch at H471 to R553 folds into the PDZ 2 domain. Residues Q585–V601 show a composition bias toward polar residues. Disordered stretches follow at residues Q585–G622 and Q719–D820. Positions T642 to R720 constitute a PDZ 3 domain. Phosphoserine occurs at positions 729 and 740. Residues Q741–H755 show a composition bias toward low complexity. S799 is subject to Phosphoserine. Residues D840 to R922 enclose the PDZ 4 domain. The tract at residues E932–G984 is disordered. 2 stretches are compositionally biased toward polar residues: residues P938–S950 and P958–T967. Over residues S974–G984 the composition is skewed to gly residues. The 97-residue stretch at D997–D1093 folds into the PDZ 5 domain. S1070 carries the phosphoserine modification. Over residues T1111 to K1129 the composition is skewed to polar residues. Residues T1111–Q1142 are disordered. The region spanning T1151 to D1233 is the PDZ 6 domain.

As to quaternary structure, part of a complex composed of AMOTL2, MAGI1 and CDH5, within the complex AMOTL2 acts as a scaffold protein for the interaction of MAGI1 with CDH5. The complex is required for coupling actin fibers to cell junctions in endothelial cells. Interacts through its WW 2 domain with SYNPO and through its PDZ 5 domain with ACTN4. Interacts with cytoplasmic domain of ADGRB1. Interacts via its WW domains with DRPLA. Interacts with ESAM, LRP2 and CXADR. May interact with CTNNB1. Interacts through its PDZ 1 domain with NET1. Interacts with ASIC3 and AMOT. Interacts with FCHSD2. Interacts with IGSF5/JAM4 and through its PDZ 2 and 3 domains with NPHS1 forming a tripartite complex. Interacts with DDN. May interact (via PDZ domain) with RAPGEF2. Interacts with DLL1. Interacts with KCNJ10 and possibly with KCNJ10/KCNJ16 heterodimer; this interaction may facilitate KCNJ10/KCNJ16 potassium channel expression at the basolateral membrane in kidney tubular cells. Interacts with PRRG4 (via cytoplasmic domain).

The protein resides in the cell junction. Its subcellular location is the tight junction. The protein localises to the cytoplasm. It localises to the membrane. Its function is as follows. Plays a role in coupling actin fibers to cell junctions in endothelial cells, via its interaction with AMOTL2 and CDH5. May regulate acid-induced ASIC3 currents by modulating its expression at the cell surface. The sequence is that of Membrane-associated guanylate kinase, WW and PDZ domain-containing protein 1 (Magi1) from Rattus norvegicus (Rat).